The chain runs to 234 residues: Phosphoribosylaminoimidazole-succinocarboxamide synthase (234 aa).

The protein belongs to the SAICAR synthetase family.

It carries out the reaction 5-amino-1-(5-phospho-D-ribosyl)imidazole-4-carboxylate + L-aspartate + ATP = (2S)-2-[5-amino-1-(5-phospho-beta-D-ribosyl)imidazole-4-carboxamido]succinate + ADP + phosphate + 2 H(+). It participates in purine metabolism; IMP biosynthesis via de novo pathway; 5-amino-1-(5-phospho-D-ribosyl)imidazole-4-carboxamide from 5-amino-1-(5-phospho-D-ribosyl)imidazole-4-carboxylate: step 1/2. This Streptococcus uberis (strain ATCC BAA-854 / 0140J) protein is Phosphoribosylaminoimidazole-succinocarboxamide synthase.